A 779-amino-acid chain; its full sequence is Probable ATP-dependent RNA helicase DHX40 (779 aa).

The tract at residues 1–53 is disordered; it reads MSRFPAVAGRAPRRQEEGERPVELQEERPSAVRIADREEKGCTSQEGGTTPTF. Basic and acidic residues predominate over residues 13–41; the sequence is RRQEEGERPVELQEERPSAVRIADREEKG. Positions 42–53 are enriched in polar residues; that stretch reads CTSQEGGTTPTF. The Helicase ATP-binding domain occupies 63–231; sequence IQAVRDNSFL…FGNCPIFDIP (169 aa). 76–83 serves as a coordination point for ATP; that stretch reads GNTGSGKT. A DEAH box motif is present at residues 173–176; sequence DEAH. Positions 263 to 442 constitute a Helicase C-terminal domain; it reads TMDIHLNEMA…SVVLTLKCLA (180 aa).

This sequence belongs to the DEAD box helicase family. DEAH subfamily.

It carries out the reaction ATP + H2O = ADP + phosphate + H(+). Its function is as follows. Probable ATP-dependent RNA helicase. The polypeptide is Probable ATP-dependent RNA helicase DHX40 (Dhx40) (Rattus norvegicus (Rat)).